The primary structure comprises 517 residues: Squalene epoxidase 6 (517 aa).

A run of 2 helical transmembrane segments spans residues 3-23 (FTHV…VFYL) and 45-65 (AADV…YALA). FAD-binding positions include 55-56 (VG), 75-76 (ER), Arg83, Phe88, Arg156, Val172, Asp336, and Met349. Residues 447–467 (LVYHLCAITLSSIGQLLSPFP) form a helical membrane-spanning segment.

The protein belongs to the squalene monooxygenase family. It depends on FAD as a cofactor. As to expression, expressed in seedlings, leaves, stems, inflorescences and siliques.

The protein localises to the membrane. It catalyses the reaction squalene + reduced [NADPH--hemoprotein reductase] + O2 = (S)-2,3-epoxysqualene + oxidized [NADPH--hemoprotein reductase] + H2O + H(+). The protein operates within terpene metabolism; lanosterol biosynthesis; lanosterol from farnesyl diphosphate: step 2/3. Catalyzes the stereospecific oxidation of squalene to (S)-2,3-epoxysqualene, and is considered to be a rate-limiting enzyme in steroid biosynthesis. The chain is Squalene epoxidase 6 (SQE6) from Arabidopsis thaliana (Mouse-ear cress).